The following is a 331-amino-acid chain: Beta-ketoacyl-[acyl-carrier-protein] synthase III (331 aa).

Residues Cys-115 and His-255 contribute to the active site. The interval 256 to 260 is ACP-binding; the sequence is QANFR. Residue Asn-285 is part of the active site.

This sequence belongs to the thiolase-like superfamily. FabH family. As to quaternary structure, homodimer.

It localises to the cytoplasm. It catalyses the reaction malonyl-[ACP] + acetyl-CoA + H(+) = 3-oxobutanoyl-[ACP] + CO2 + CoA. Its pathway is lipid metabolism; fatty acid biosynthesis. Catalyzes the condensation reaction of fatty acid synthesis by the addition to an acyl acceptor of two carbons from malonyl-ACP. Catalyzes the first condensation reaction which initiates fatty acid synthesis and may therefore play a role in governing the total rate of fatty acid production. Possesses both acetoacetyl-ACP synthase and acetyl transacylase activities. Its substrate specificity determines the biosynthesis of branched-chain and/or straight-chain of fatty acids. In Helicobacter pylori (strain Shi470), this protein is Beta-ketoacyl-[acyl-carrier-protein] synthase III.